The following is a 275-amino-acid chain: 4-hydroxy-3-methylbut-2-enyl diphosphate reductase (275 aa).

Cysteine 12 lines the [4Fe-4S] cluster pocket. 2 residues coordinate (2E)-4-hydroxy-3-methylbut-2-enyl diphosphate: histidine 36 and histidine 70. Histidine 36 and histidine 70 together coordinate dimethylallyl diphosphate. Residues histidine 36 and histidine 70 each contribute to the isopentenyl diphosphate site. Cysteine 92 is a [4Fe-4S] cluster binding site. Histidine 120 is a (2E)-4-hydroxy-3-methylbut-2-enyl diphosphate binding site. Histidine 120 provides a ligand contact to dimethylallyl diphosphate. Residue histidine 120 coordinates isopentenyl diphosphate. The Proton donor role is filled by glutamate 122. Threonine 158 contacts (2E)-4-hydroxy-3-methylbut-2-enyl diphosphate. Cysteine 186 is a binding site for [4Fe-4S] cluster. (2E)-4-hydroxy-3-methylbut-2-enyl diphosphate contacts are provided by serine 214, serine 215, asparagine 216, and serine 258. Residues serine 214, serine 215, asparagine 216, and serine 258 each coordinate dimethylallyl diphosphate. Isopentenyl diphosphate contacts are provided by serine 214, serine 215, asparagine 216, and serine 258.

The protein belongs to the IspH family. [4Fe-4S] cluster serves as cofactor.

The catalysed reaction is isopentenyl diphosphate + 2 oxidized [2Fe-2S]-[ferredoxin] + H2O = (2E)-4-hydroxy-3-methylbut-2-enyl diphosphate + 2 reduced [2Fe-2S]-[ferredoxin] + 2 H(+). It catalyses the reaction dimethylallyl diphosphate + 2 oxidized [2Fe-2S]-[ferredoxin] + H2O = (2E)-4-hydroxy-3-methylbut-2-enyl diphosphate + 2 reduced [2Fe-2S]-[ferredoxin] + 2 H(+). The protein operates within isoprenoid biosynthesis; dimethylallyl diphosphate biosynthesis; dimethylallyl diphosphate from (2E)-4-hydroxy-3-methylbutenyl diphosphate: step 1/1. It functions in the pathway isoprenoid biosynthesis; isopentenyl diphosphate biosynthesis via DXP pathway; isopentenyl diphosphate from 1-deoxy-D-xylulose 5-phosphate: step 6/6. Catalyzes the conversion of 1-hydroxy-2-methyl-2-(E)-butenyl 4-diphosphate (HMBPP) into a mixture of isopentenyl diphosphate (IPP) and dimethylallyl diphosphate (DMAPP). Acts in the terminal step of the DOXP/MEP pathway for isoprenoid precursor biosynthesis. The sequence is that of 4-hydroxy-3-methylbut-2-enyl diphosphate reductase from Campylobacter hominis (strain ATCC BAA-381 / DSM 21671 / CCUG 45161 / LMG 19568 / NCTC 13146 / CH001A).